A 242-amino-acid chain; its full sequence is MLVIPAIDLKDGKCVRLRQGRMDDATVFSDDPVEVAGRWVEAGARRLHIVDLDGAISGEPRNAGIISEIVARYPDLPVQVGGGIRDDDTVQVYLDAGVQWVIIGTKAVSAPHFVNDLCLEFPGHIIVGLDAKDGKVAIDGWSKLSNHDVIDMAMHFEQDGVAAIIYTDISRDGMMQGVNVESTVKLAQAVHVPVIASGGVTNLDDIRRLCAVSEEGIDGVIVGRALYEGTIDLAEAQKLADQ.

The Proton acceptor role is filled by aspartate 8. The active-site Proton donor is aspartate 130.

Belongs to the HisA/HisF family.

The protein resides in the cytoplasm. It catalyses the reaction 1-(5-phospho-beta-D-ribosyl)-5-[(5-phospho-beta-D-ribosylamino)methylideneamino]imidazole-4-carboxamide = 5-[(5-phospho-1-deoxy-D-ribulos-1-ylimino)methylamino]-1-(5-phospho-beta-D-ribosyl)imidazole-4-carboxamide. The protein operates within amino-acid biosynthesis; L-histidine biosynthesis; L-histidine from 5-phospho-alpha-D-ribose 1-diphosphate: step 4/9. The sequence is that of 1-(5-phosphoribosyl)-5-[(5-phosphoribosylamino)methylideneamino] imidazole-4-carboxamide isomerase from Thioalkalivibrio sulfidiphilus (strain HL-EbGR7).